Here is a 756-residue protein sequence, read N- to C-terminus: Cartilage oligomeric matrix protein (756 aa).

Positions 1–20 are cleaved as a signal peptide; the sequence is MVLAAARVLLLTLAALGASG. The tract at residues 22–85 is COMP N-terminal; the sequence is GQMPLGGDLG…PARTPKLTVR (64 aa). An EGF-like 1 domain is found at 86–125; that stretch reads PLSQCSPGFCFPGVACTETANGARCGPCPEGFTGNGSHCA. Disulfide bonds link cysteine 90-cysteine 101, cysteine 95-cysteine 110, cysteine 113-cysteine 124, cysteine 130-cysteine 141, cysteine 135-cysteine 150, cysteine 183-cysteine 196, cysteine 190-cysteine 205, cysteine 228-cysteine 242, cysteine 236-cysteine 252, and cysteine 254-cysteine 265. The N-linked (GlcNAc...) asparagine glycan is linked to asparagine 120. Positions 126 to 178 constitute an EGF-like 2; calcium-binding domain; that stretch reads DVNECTAHPCFPRVRCINTSPGFRCEACPPGFSGPTHEGVGLAFAKANKQVCT. Residues 179 to 218 form the EGF-like 3; calcium-binding domain; sequence DINECETGQHNCVPNSVCVNTVGSFQCGPCQPGFVGDQAS. The EGF-like 4 domain occupies 224 to 266; sequence PQRFCPDGTPSPCHEKADCVLERDGSRSCVCAVGWAGNGLICG. TSP type-3 repeat units lie at residues 267–299, 300–335, 336–358, 359–394, 395–417, 418–455, 456–491, and 492–527; these read RDTD…NSGQ, EDVD…NPDQ, RNTD…NDDQ, KDTD…NSDQ, KDTD…NADQ, RDVD…NSAQ, QDSD…NPGQ, and EDMD…EVTL. The interval 322–502 is disordered; that stretch reads NEKDNCPLVR…DMDRDGVGDA (181 aa). Composition is skewed to basic and acidic residues over residues 333–345, 351–369, and 415–425; these read PDQR…KWGD, RSQK…RGDA, and ADQRDVDHDFV. The Cell attachment site signature appears at 366–368; it reads RGD. Over residues 466–475 the composition is skewed to acidic residues; it reads ACDDDDDNDG. Residues 526–756 are mediates cell survival and induction of the IAP family of survival proteins; the sequence is TLTDFRAFQT…DYEAQRLLQA (231 aa). Residues 531–745 form the TSP C-terminal domain; sequence RAFQTVVLDP…LRYRCNDTIP (215 aa). Asparagine 741 carries N-linked (GlcNAc...) asparagine glycosylation.

Belongs to the thrombospondin family. Pentamer; disulfide-linked. Exists in a more compact conformation in the presence of calcium and shows a more extended conformation in the absence of calcium. Interacts with ITGB3, ITGA5 and FN1. Binding to FN1 requires the presence of divalent cations (Ca(2+), Mg(2+) or Mn(2+)). The greatest amount of binding is seen in the presence of Mn(2+). Interacts with MATN1, MATN3, MATN4 and ACAN. Binds heparin, heparan sulfate and chondroitin sulfate. EDTA dimishes significantly its binding to ACAN and abolishes its binding to MATN3, MATN4 and chondroitin sulfate. Interacts with collagen I, II and IX, and interaction with these collagens is dependent on the presence of zinc ions. Interacts with ADAMTS12. Interacts with ITGA7. Ca(2+) serves as cofactor. Post-translationally, proteolytically cleaved by metalloproteases ADAMTS4 and ADAMTS1 with ADAMTS4 showing more potent activity.

The protein localises to the secreted. It localises to the extracellular space. Its subcellular location is the extracellular matrix. Its function is as follows. Plays a role in the structural integrity of cartilage via its interaction with other extracellular matrix proteins such as the collagens and fibronectin. Can mediate the interaction of chondrocytes with the cartilage extracellular matrix through interaction with cell surface integrin receptors. Could play a role in the pathogenesis of osteoarthritis. Potent suppressor of apoptosis in both primary chondrocytes and transformed cells. Suppresses apoptosis by blocking the activation of caspase-3 and by inducing the IAP family of survival proteins (BIRC3, BIRC2, BIRC5 and XIAP). Essential for maintaining a vascular smooth muscle cells (VSMCs) contractile/differentiated phenotype under physiological and pathological stimuli. Maintains this phenotype of VSMCs by interacting with ITGA7. The protein is Cartilage oligomeric matrix protein (COMP) of Bos taurus (Bovine).